The sequence spans 95 residues: Exodeoxyribonuclease 7 small subunit (95 aa).

A compositionally biased stretch (basic and acidic residues) spans 62–83 (LTKDESKKTNKTGFRGESKTTE). A disordered region spans residues 62–95 (LTKDESKKTNKTGFRGESKTTETKNNTAQEEDLF).

Belongs to the XseB family. As to quaternary structure, heterooligomer composed of large and small subunits.

Its subcellular location is the cytoplasm. It carries out the reaction Exonucleolytic cleavage in either 5'- to 3'- or 3'- to 5'-direction to yield nucleoside 5'-phosphates.. Functionally, bidirectionally degrades single-stranded DNA into large acid-insoluble oligonucleotides, which are then degraded further into small acid-soluble oligonucleotides. This Leptospira interrogans serogroup Icterohaemorrhagiae serovar copenhageni (strain Fiocruz L1-130) protein is Exodeoxyribonuclease 7 small subunit.